The chain runs to 4391 residues: Basement membrane-specific heparan sulfate proteoglycan core protein (4391 aa).

A signal peptide spans 1–21; the sequence is MGWRAAGALLLALLLHGRLLA. An O-linked (GalNAc...) threonine glycan is attached at T42. O-linked (Xyl...) (heparan sulfate) serine glycans are attached at residues S65, S71, and S76. The 112-residue stretch at 80 to 191 folds into the SEA domain; sequence QMVYFRALVN…QGFQFRRLGT (112 aa). Residue N89 is glycosylated (N-linked (GlcNAc...) asparagine). LDL-receptor class A domains are found at residues 198–235, 284–320, 324–360, and 367–404; these read ACTE…LNCE, PCGP…LDCG, PCEP…ANCP, and VCGP…FGCM. 12 disulfide bridges follow: C199–C212, C206–C225, C219–C234, C285–C297, C292–C310, C304–C319, C325–C337, C332–C350, C344–C359, C368–C381, C375–C394, and C388–C403. Positions 405–504 constitute an Ig-like C2-type 1 domain; the sequence is PPQVVTPPRE…VLELVPQRGP (100 aa). In terms of domain architecture, Laminin EGF-like 1; first part spans 521-530; that stretch reads CFCFGITSVC. One can recognise a Laminin IV type A 1 domain in the interval 538–730; sequence DQIRLRFDQP…SHGRAHSVEE (193 aa). N554 carries N-linked (GlcNAc...) asparagine glycosylation. The region spanning 731 to 763 is the Laminin EGF-like 1; second part domain; sequence CRCPIGYSGLSCESCDAHFTRVPGGPYLGTCSG. 11 disulfides stabilise this stretch: C764–C773, C766–C780, C783–C792, C795–C811, C814–C829, C816–C839, C842–C851, C854–C869, C879–C892, C894–C903, and C906–C921. 2 Laminin EGF-like domains span residues 764–813 and 814–871; these read CNCN…SCRP and CPCP…KCRP. The region spanning 879–923 is the Laminin EGF-like 4; truncated domain; the sequence is CDERGSMGTSGEACRCKNNVVGRLCNECADGSFHLSTRNPDGCLK. In terms of domain architecture, Laminin EGF-like 5; first part spans 924–933; sequence CFCMGVSRHC. The Laminin IV type A 2 domain maps to 941-1125; it reads AQLHGASEEP…GQDPALEVEQ (185 aa). Residues 1126–1158 form the Laminin EGF-like 5; second part domain; sequence CSCPPGYRGPSCQDCDTGYTRTPSGLYLGTCER. Intrachain disulfides connect C1159/C1168, C1161/C1175, C1178/C1187, C1190/C1206, C1209/C1224, C1211/C1234, C1237/C1246, C1249/C1263, C1275/C1287, C1277/C1293, C1295/C1304, and C1307/C1322. 3 Laminin EGF-like domains span residues 1159–1208, 1209–1265, and 1275–1324; these read CSCH…DCQL, CPCY…PCQR, and CNCD…GCLP. The Laminin EGF-like 9; first part domain maps to 1325-1334; that stretch reads CFCMGITQQC. A Laminin IV type A 3 domain is found at 1344-1529; it reads ISTHFAPGDF…NRPRALEVEE (186 aa). The 33-residue stretch at 1530–1562 folds into the Laminin EGF-like 9; second part domain; sequence CRCPPGYIGLSCQDCAPGYTRTGSGLYLGHCEL. Intrachain disulfides connect C1563/C1572, C1565/C1579, C1582/C1591, C1594/C1610, C1613/C1628, C1615/C1638, C1641/C1650, and C1653/C1668. 2 consecutive Laminin EGF-like domains span residues 1563–1612 and 1613–1670; these read CECN…DCQP and CACP…QCLP. 21 consecutive Ig-like C2-type domains span residues 1677–1771, 1772–1865, 1866–1955, 1956–2051, 2052–2151, 2152–2244, 2245–2340, 2341–2436, 2437–2533, 2534–2629, 2630–2726, 2727–2826, 2827–2924, 2925–3021, 3022–3112, 3113–3211, 3212–3298, 3299–3399, 3400–3488, 3489–3574, and 3575–3662; these read LVVE…SKPI, TVTV…TLSA, PVVS…GGGG, PRVQ…ASPP, PVKI…PGST, RPIR…PGPI, PPVR…AGST, QPIR…LGVT, PTVR…QGVA, YPVR…PSVS, PPIR…PGSS, MPIR…PGGA, PPIR…PGLA, QPIY…RLRS, PVIS…HGPP, TVSV…APGA, PQVQ…VESP, PYAT…AGST, PTVQ…ALPS, VLIN…LVQA, and LPQI…PERV. N1755 carries N-linked (GlcNAc...) asparagine glycosylation. A glycan (N-linked (GlcNAc...) asparagine) is linked at N2121. The disordered stretch occupies residues 2994–3014; sequence ASGPGPEQEASFTVTVPPSEG. S2995 carries O-linked (Xyl...) (chondroitin sulfate) serine glycosylation. The segment covering 3003 to 3014 has biased composition (polar residues); that stretch reads ASFTVTVPPSEG. N-linked (GlcNAc...) asparagine glycosylation is found at N3072 and N3105. N-linked (GlcNAc...) asparagine glycosylation is present at N3279. Residues 3663-3843 form the Laminin G-like 1 domain; it reads VPYFTQTPYS…DLNLTAHGIS (181 aa). N-linked (GlcNAc...) asparagine glycans are attached at residues N3780 and N3836. 7 disulfides stabilise this stretch: C3819–C3845, C3848–C3859, C3853–C3869, C3871–C3880, C3888–C3899, C3893–C3910, and C3912–C3921. EGF-like domains follow at residues 3844-3881 and 3884-3922; these read HCPT…SRCE and QALH…LRCE. The Laminin G-like 2 domain maps to 3928 to 4103; the sequence is TTPSLSGAGS…LGSQGIGQCY (176 aa). O-linked (Xyl...) (chondroitin sulfate) serine glycosylation occurs at S3933. A glycan (N-linked (GlcNAc...) asparagine) is linked at N4068. 7 disulfides stabilise this stretch: C4076–C4102, C4108–C4119, C4113–C4129, C4131–C4140, C4147–C4159, C4153–C4164, and C4166–C4175. EGF-like domains follow at residues 4104-4141 and 4143-4176; these read DSSP…DLCE and EENP…PRCQ. A mediates motor neuron attachment region spans residues 4149–4151; sequence LRE. O-linked (Xyl...) (chondroitin sulfate) serine glycosylation is found at S4179 and S4193. One can recognise a Laminin G-like 3 domain in the interval 4201 to 4389; that stretch reads QYGAYFHDDG…AQAGANTRPC (189 aa). Ca(2+)-binding residues include D4258 and L4275. Positions 4299-4301 are mediates motor neuron attachment; it reads LRE. Ca(2+) is bound by residues A4325 and N4327. Residues C4355 and C4389 are joined by a disulfide bond. Positions 4364 to 4391 are disordered; the sequence is ARPGAPPPQPLDLQHRAQAGANTRPCPS.

As to quaternary structure, has a strong tendency to aggregate in dimers or stellate structures. Interacts with other basement membrane components such as laminin, prolargin and collagen type IV. Interacts with COL13A1. Interacts with FGFBP1. Interacts with VWA1. Interacts (via C-terminus) with ECM1 (via C-terminus). Interacts with SVEP1. Post-translationally, proteolytic processing produces the C-terminal angiogenic peptide, endorepellin. This peptide can be further processed to produce the LG3 peptide. In terms of processing, O-glycosylated with core 1 or possibly core 8 glycans. Contains three heparan sulfate chains. Also contains chondroitin sulfate. As to expression, detected in cerebrospinal fluid, fibroblasts and urine (at protein level).

Its subcellular location is the secreted. It is found in the extracellular space. The protein resides in the extracellular matrix. It localises to the basement membrane. Its function is as follows. Integral component of basement membranes. Component of the glomerular basement membrane (GBM), responsible for the fixed negative electrostatic membrane charge, and which provides a barrier which is both size- and charge-selective. It serves as an attachment substrate for cells. Plays essential roles in vascularization. Critical for normal heart development and for regulating the vascular response to injury. Also required for avascular cartilage development. In terms of biological role, anti-angiogenic and anti-tumor peptide that inhibits endothelial cell migration, collagen-induced endothelial tube morphogenesis and blood vessel growth in the chorioallantoic membrane. Blocks endothelial cell adhesion to fibronectin and type I collagen. Anti-tumor agent in neovascularization. Interaction with its ligand, integrin alpha2/beta1, is required for the anti-angiogenic properties. Evokes a reduction in phosphorylation of receptor tyrosine kinases via alpha2/beta1 integrin-mediated activation of the tyrosine phosphatase, PTPN6. Has anti-angiogenic properties that require binding of calcium ions for full activity. This Homo sapiens (Human) protein is Basement membrane-specific heparan sulfate proteoglycan core protein (HSPG2).